Reading from the N-terminus, the 165-residue chain is Crossover junction endodeoxyribonuclease RuvC (165 aa).

Catalysis depends on residues Asp-7, Glu-68, and His-142. Positions 7, 68, and 142 each coordinate Mg(2+).

It belongs to the RuvC family. As to quaternary structure, homodimer which binds Holliday junction (HJ) DNA. The HJ becomes 2-fold symmetrical on binding to RuvC with unstacked arms; it has a different conformation from HJ DNA in complex with RuvA. In the full resolvosome a probable DNA-RuvA(4)-RuvB(12)-RuvC(2) complex forms which resolves the HJ. It depends on Mg(2+) as a cofactor.

The protein localises to the cytoplasm. The enzyme catalyses Endonucleolytic cleavage at a junction such as a reciprocal single-stranded crossover between two homologous DNA duplexes (Holliday junction).. In terms of biological role, the RuvA-RuvB-RuvC complex processes Holliday junction (HJ) DNA during genetic recombination and DNA repair. Endonuclease that resolves HJ intermediates. Cleaves cruciform DNA by making single-stranded nicks across the HJ at symmetrical positions within the homologous arms, yielding a 5'-phosphate and a 3'-hydroxyl group; requires a central core of homology in the junction. The consensus cleavage sequence is 5'-(A/T)TT(C/G)-3'. Cleavage occurs on the 3'-side of the TT dinucleotide at the point of strand exchange. HJ branch migration catalyzed by RuvA-RuvB allows RuvC to scan DNA until it finds its consensus sequence, where it cleaves and resolves the cruciform DNA. In Anaplasma marginale (strain St. Maries), this protein is Crossover junction endodeoxyribonuclease RuvC.